The sequence spans 247 residues: NAD-dependent protein deacetylase (247 aa).

Residues 1-244 (MIYEKVAEEL…PKILENVRQK (244 aa)) enclose the Deacetylase sirtuin-type domain. The NAD(+) site is built by Ala22, Thr26, Phe33, Arg34, Gln98, Ile100, Asp101, and His116. Phe33 serves as a coordination point for nicotinamide. Positions 100 and 101 each coordinate nicotinamide. Residue His116 is the Proton acceptor of the active site. Residues Cys124, Cys127, Cys149, and Cys151 each contribute to the Zn(2+) site. Residues Ser187, Ser188, Asn212, and Val230 each coordinate NAD(+).

Belongs to the sirtuin family. Class U subfamily. Monomer. It depends on Zn(2+) as a cofactor.

Its subcellular location is the cytoplasm. It catalyses the reaction N(6)-acetyl-L-lysyl-[protein] + NAD(+) + H2O = 2''-O-acetyl-ADP-D-ribose + nicotinamide + L-lysyl-[protein]. Its function is as follows. NAD-dependent protein deacetylase which modulates the activities of several enzymes which are inactive in their acetylated form. Deacetylates the N-terminal lysine residue of albA1, the major archaeal DNA compaction protein and that, in turn, increases albA1's DNA binding affinity, thereby repressing transcription. In Saccharolobus solfataricus (strain ATCC 35092 / DSM 1617 / JCM 11322 / P2) (Sulfolobus solfataricus), this protein is NAD-dependent protein deacetylase.